Reading from the N-terminus, the 129-residue chain is Histone H2A-III (129 aa).

The protein belongs to the histone H2A family. In terms of assembly, the nucleosome is a histone octamer containing two molecules each of H2A, H2B, H3 and H4 assembled in one H3-H4 heterotetramer and two H2A-H2B heterodimers. The octamer wraps approximately 147 bp of DNA.

It localises to the nucleus. It is found in the chromosome. Functionally, core component of nucleosome. Nucleosomes wrap and compact DNA into chromatin, limiting DNA accessibility to the cellular machineries which require DNA as a template. Histones thereby play a central role in transcription regulation, DNA repair, DNA replication and chromosomal stability. DNA accessibility is regulated via a complex set of post-translational modifications of histones, also called histone code, and nucleosome remodeling. This chain is Histone H2A-III, found in Volvox carteri (Green alga).